The chain runs to 81 residues: MDTSLKNNDGALDADNKNYQDYKDEPDKTSDVLDVTKYNSMVDCCHKNYSTFTSEWYINERKYNDVPEGPKKADVHRCTII.

Positions 1-28 (MDTSLKNNDGALDADNKNYQDYKDEPDK) are disordered. Positions 14 to 28 (ADNKNYQDYKDEPDK) are enriched in basic and acidic residues.

It belongs to the asfivirus L83L family. As to quaternary structure, interacts with host IL1B.

It is found in the host cytoplasm. In terms of biological role, may subvert the host innate immune response by interacting with host IL1B and interfering with its function. The protein is Protein L83L of African swine fever virus (isolate Tick/South Africa/Pretoriuskop Pr4/1996) (ASFV).